Consider the following 37-residue polypeptide: Kappa-actitoxin-Bcs3b (37 aa).

The ShKT domain occupies 2–37 (CKDGFPTATCQHAKLVGNCKNSQKYRANCAKTCGPC). 3 disulfide bridges follow: Cys2-Cys37, Cys11-Cys30, and Cys20-Cys34. The crucial for binding to potassium channels stretch occupies residues 25–26 (KY).

Belongs to the sea anemone type 1 potassium channel toxin family. Type 1b subfamily.

It localises to the secreted. The protein localises to the nematocyst. Functionally, inhibits voltage-gated potassium channels (IC(50)=14.42 nM for rKCNA1/Kv1.1, IC(50)=80.4 nM for rKCNA2/Kv1.2, IC(50)=7.76 nM for rKCNA6/Kv1.6, IC(50)=13.12 nM for hKCNA3/Kv1.3, and IC(50)=49.14 nM for insect Shaker IR). Binds the Shaker IR channels in a voltage-independent manner. The polypeptide is Kappa-actitoxin-Bcs3b (Bunodosoma caissarum (Sea anemone)).